The following is a 349-amino-acid chain: Small ribosomal subunit biogenesis GTPase RsgA 2 (349 aa).

The CP-type G domain maps to 97-252 (AEQLIATNVD…IIDTPGMREL (156 aa)). Residues 142–145 (TKAD) and 194–202 (GSSGVGKST) each bind GTP. Residues Cys275, Cys280, His282, and Cys288 each contribute to the Zn(2+) site.

This sequence belongs to the TRAFAC class YlqF/YawG GTPase family. RsgA subfamily. In terms of assembly, monomer. Associates with 30S ribosomal subunit, binds 16S rRNA. Zn(2+) is required as a cofactor.

The protein localises to the cytoplasm. In terms of biological role, one of several proteins that assist in the late maturation steps of the functional core of the 30S ribosomal subunit. Helps release RbfA from mature subunits. May play a role in the assembly of ribosomal proteins into the subunit. Circularly permuted GTPase that catalyzes slow GTP hydrolysis, GTPase activity is stimulated by the 30S ribosomal subunit. The polypeptide is Small ribosomal subunit biogenesis GTPase RsgA 2 (Vibrio vulnificus (strain CMCP6)).